A 90-amino-acid polypeptide reads, in one-letter code: Small ribosomal subunit protein bS16 (90 aa).

The protein belongs to the bacterial ribosomal protein bS16 family.

This chain is Small ribosomal subunit protein bS16, found in Bacillus pumilus (strain SAFR-032).